The primary structure comprises 297 residues: Probable GTP 3',8-cyclase (297 aa).

In terms of domain architecture, Radical SAM core spans 4–220 (EFGREIRSFR…VVTRKFMQNR (217 aa)). Arg13 is a binding site for GTP. Cys20 and Cys24 together coordinate [4Fe-4S] cluster. S-adenosyl-L-methionine is bound at residue Tyr26. Residue Cys27 participates in [4Fe-4S] cluster binding. A GTP-binding site is contributed by Lys61. An S-adenosyl-L-methionine-binding site is contributed by Gly65. Thr91 is a binding site for GTP. Ser115 provides a ligand contact to S-adenosyl-L-methionine. GTP is bound at residue Lys151. [4Fe-4S] cluster-binding residues include Cys242 and Cys245. 247–249 (RIR) lines the GTP pocket. Cys259 is a [4Fe-4S] cluster binding site.

It belongs to the radical SAM superfamily. MoaA family. [4Fe-4S] cluster serves as cofactor.

The enzyme catalyses GTP + AH2 + S-adenosyl-L-methionine = (8S)-3',8-cyclo-7,8-dihydroguanosine 5'-triphosphate + 5'-deoxyadenosine + L-methionine + A + H(+). The protein operates within cofactor biosynthesis; molybdopterin biosynthesis. Catalyzes the cyclization of GTP to (8S)-3',8-cyclo-7,8-dihydroguanosine 5'-triphosphate. The chain is Probable GTP 3',8-cyclase from Methanococcus vannielii (strain ATCC 35089 / DSM 1224 / JCM 13029 / OCM 148 / SB).